Here is an 88-residue protein sequence, read N- to C-terminus: Putative regulatory protein PCC7424_3427 (88 aa).

This sequence belongs to the RemA family.

The polypeptide is Putative regulatory protein PCC7424_3427 (Gloeothece citriformis (strain PCC 7424) (Cyanothece sp. (strain PCC 7424))).